We begin with the raw amino-acid sequence, 396 residues long: Elongation factor Tu (396 aa).

Residues 10-205 form the tr-type G domain; the sequence is KEHVNIGTIG…AVDNYIETPV (196 aa). Residues 19 to 26 are G1; sequence GHVDHGKT. 19 to 26 is a GTP binding site; sequence GHVDHGKT. Thr-26 contacts Mg(2+). The tract at residues 60–64 is G2; the sequence is GITIN. Positions 81-84 are G3; sequence DCPG. GTP is bound by residues 81–85 and 136–139; these read DCPGH and NKVD. The tract at residues 136-139 is G4; it reads NKVD. A G5 region spans residues 175–177; that stretch reads SAL.

Belongs to the TRAFAC class translation factor GTPase superfamily. Classic translation factor GTPase family. EF-Tu/EF-1A subfamily. In terms of assembly, monomer.

The protein localises to the cytoplasm. It catalyses the reaction GTP + H2O = GDP + phosphate + H(+). Its function is as follows. GTP hydrolase that promotes the GTP-dependent binding of aminoacyl-tRNA to the A-site of ribosomes during protein biosynthesis. The chain is Elongation factor Tu from Mycoplasmopsis pulmonis (strain UAB CTIP) (Mycoplasma pulmonis).